The primary structure comprises 320 residues: Uridine phosphorylase 2 (320 aa).

Residues Gly-66, Arg-100, and 144-147 (RIGT) each bind phosphate. Residues Cys-95 and Cys-102 are joined by a disulfide bond. Uridine contacts are provided by residues 148–149 (SG) and 223–225 (QGR).

It belongs to the PNP/UDP phosphorylase family. Homodimer. Liver specific.

The enzyme catalyses uridine + phosphate = alpha-D-ribose 1-phosphate + uracil. The catalysed reaction is 2'-deoxyuridine + phosphate = 2-deoxy-alpha-D-ribose 1-phosphate + uracil. It functions in the pathway pyrimidine metabolism; UMP biosynthesis via salvage pathway; uracil from uridine (phosphorylase route): step 1/1. A conditional disulfide bridge can form within the protein that dislocates a critical phosphate-coordinating arginine Arg-100 away from the active site, disabling the enzyme. Catalyzes the reversible phosphorylytic cleavage of uridine to uracil and ribose-1-phosphate which can then be utilized as carbon and energy sources or in the rescue of pyrimidine bases for nucleotide synthesis. Shows broad substrate specificity and can also accept deoxyuridine and other analogous compounds. This Mus musculus (Mouse) protein is Uridine phosphorylase 2.